Here is a 332-residue protein sequence, read N- to C-terminus: Putative pumilio homolog 17 (332 aa).

Residues 1-302 (MTNINRLSMS…ILTADLFYSL (302 aa)) form the PUM-HD domain. The Pumilio 1 repeat unit spans residues 82–117 (SDSDYFMVITRNKNGSKSLQKLMRMSDDMDVFFFVA). One copy of the Pumilio 2; degenerate repeat lies at 118–152 (IMRLFIHVMIDKYASYVAIQGMRIFKQDKRELMYD). Pumilio repeat units follow at residues 153-188 (HILR…DELM), 189-225 (DIVS…NIAD), 226-264 (KLCG…DLLA), and 265-300 (CKTE…DLFY).

The protein resides in the cytoplasm. Functionally, sequence-specific RNA-binding protein that regulates translation and mRNA stability by binding the 3'-UTR of target mRNAs. This is Putative pumilio homolog 17 (APUM17) from Arabidopsis thaliana (Mouse-ear cress).